The following is a 409-amino-acid chain: Argininosuccinate synthase (409 aa).

10-18 (AYSGGLDTS) is an ATP binding site. Y87 serves as a coordination point for L-citrulline. G117 contacts ATP. The L-aspartate site is built by T119, N123, and D124. Residue N123 participates in L-citrulline binding. Positions 127, 175, 184, 260, and 272 each coordinate L-citrulline.

The protein belongs to the argininosuccinate synthase family. Type 1 subfamily. As to quaternary structure, homotetramer.

It is found in the cytoplasm. It catalyses the reaction L-citrulline + L-aspartate + ATP = 2-(N(omega)-L-arginino)succinate + AMP + diphosphate + H(+). It participates in amino-acid biosynthesis; L-arginine biosynthesis; L-arginine from L-ornithine and carbamoyl phosphate: step 2/3. This Rubrobacter xylanophilus (strain DSM 9941 / JCM 11954 / NBRC 16129 / PRD-1) protein is Argininosuccinate synthase.